The sequence spans 125 residues: Large ribosomal subunit protein bL19 (125 aa).

It belongs to the bacterial ribosomal protein bL19 family.

Its function is as follows. This protein is located at the 30S-50S ribosomal subunit interface and may play a role in the structure and function of the aminoacyl-tRNA binding site. This Ehrlichia ruminantium (strain Gardel) protein is Large ribosomal subunit protein bL19.